Reading from the N-terminus, the 274-residue chain is Glucosamine-6-phosphate deaminase (274 aa).

The Proton acceptor; for enolization step role is filled by aspartate 72. Aspartate 141 (for ring-opening step) is an active-site residue. Catalysis depends on histidine 143, which acts as the Proton acceptor; for ring-opening step. Catalysis depends on glutamate 148, which acts as the For ring-opening step.

The protein belongs to the glucosamine/galactosamine-6-phosphate isomerase family. As to quaternary structure, homohexamer.

The protein resides in the cytoplasm. It carries out the reaction alpha-D-glucosamine 6-phosphate + H2O = beta-D-fructose 6-phosphate + NH4(+). Its pathway is nucleotide-sugar biosynthesis; UDP-N-acetyl-alpha-D-glucosamine biosynthesis; alpha-D-glucosamine 6-phosphate from D-fructose 6-phosphate: step 1/1. Functionally, catalyzes the reversible conversion of alpha-D-glucosamine 6-phosphate (GlcN-6P) into beta-D-fructose 6-phosphate (Fru-6P) and ammonium ion, a regulatory reaction step in de novo uridine diphosphate-N-acetyl-alpha-D-glucosamine (UDP-GlcNAc) biosynthesis via hexosamine pathway. This Drosophila pseudoobscura pseudoobscura (Fruit fly) protein is Glucosamine-6-phosphate deaminase.